The sequence spans 734 residues: Photosystem I P700 chlorophyll a apoprotein A2 (734 aa).

8 helical membrane passes run I46–A69, L135–Q158, L175–I199, I273–Y291, L330–Y353, A369–V395, A417–H439, and F517–V535. Residues C559 and C568 each contribute to the [4Fe-4S] cluster site. The next 2 membrane-spanning stretches (helical) occupy residues A575–W596 and L643–I665. 3 residues coordinate chlorophyll a: H654, M662, and Y670. W671 contacts phylloquinone. The chain crosses the membrane as a helical span at residues L707–A727.

This sequence belongs to the PsaA/PsaB family. As to quaternary structure, the PsaA/B heterodimer binds the P700 chlorophyll special pair and subsequent electron acceptors. PSI consists of a core antenna complex that captures photons, and an electron transfer chain that converts photonic excitation into a charge separation. The eukaryotic PSI reaction center is composed of at least 11 subunits. Requires P700 is a chlorophyll a/chlorophyll a' dimer, A0 is one or more chlorophyll a, A1 is one or both phylloquinones and FX is a shared 4Fe-4S iron-sulfur center. as cofactor.

The protein localises to the plastid. Its subcellular location is the chloroplast thylakoid membrane. The catalysed reaction is reduced [plastocyanin] + hnu + oxidized [2Fe-2S]-[ferredoxin] = oxidized [plastocyanin] + reduced [2Fe-2S]-[ferredoxin]. PsaA and PsaB bind P700, the primary electron donor of photosystem I (PSI), as well as the electron acceptors A0, A1 and FX. PSI is a plastocyanin/cytochrome c6-ferredoxin oxidoreductase, converting photonic excitation into a charge separation, which transfers an electron from the donor P700 chlorophyll pair to the spectroscopically characterized acceptors A0, A1, FX, FA and FB in turn. Oxidized P700 is reduced on the lumenal side of the thylakoid membrane by plastocyanin or cytochrome c6. The sequence is that of Photosystem I P700 chlorophyll a apoprotein A2 from Cyanidium caldarium (Red alga).